Here is an 80-residue protein sequence, read N- to C-terminus: Spermatid-specific protein S2 (80 aa).

Residues 1–36 (VKSRYHQRQYRARKRYAKARRTKKPKRRPKPPRKLR) show a composition bias toward basic residues. Positions 1–44 (VKSRYHQRQYRARKRYAKARRTKKPKRRPKPPRKLRYAPSKKQP) are disordered.

Its subcellular location is the nucleus. The protein resides in the chromosome. Functionally, involved in nuclear basic protein transition: histones are replaced by spermatid specific proteins which are themselves replaced by protamines in late spermatids. The polypeptide is Spermatid-specific protein S2 (Scyliorhinus canicula (Small-spotted catshark)).